Reading from the N-terminus, the 260-residue chain is MSIRIKIDKLRQIVAYFSEFSEEVSINVDSTDELMYIFAALGGSVNIWAIIPLSASVFYRGAENIVFNLPVSKVKSCLCSFHNDAIIDIEPDLENNLVKLSSYHVVSVDCNKELMPIRTDTTICLSIDQKKSYVFNFHKYEEKCCGRTVIHLEWLLGFIKCISQHQHLAIMFKDDNIIMKTPGNTDAFSREYSMTECSQELQKFSFKIAISSLNKLRGFKKRVNVFETRIVMDNDDNILGMLFSDRVQSFKINIFMAFLD.

This sequence belongs to the chordopoxvirinae VLTF-1 family. Interacts with the late transcription factors VLTF-2 and VLTF-3. Interacts with the late transcription elongation factor VLTF-4. Interacts with itself.

In terms of biological role, associates with RNA polymerase to initiate transcription from late gene promoters. The chain is Late transcription factor 1 (OPG093) from Homo sapiens (Human).